The primary structure comprises 314 residues: 3'-5' exoribonuclease YhaM (314 aa).

Positions 163-279 constitute an HD domain; that stretch reads HVVSMLHLAK…LHYIDNLDAK (117 aa).

This sequence belongs to the YhaM family.

In terms of biological role, shows a 3'-5' exoribonuclease activity. The polypeptide is 3'-5' exoribonuclease YhaM (Bacillus pumilus (strain SAFR-032)).